We begin with the raw amino-acid sequence, 272 residues long: Undecaprenyl-diphosphatase (272 aa).

Helical transmembrane passes span 2–22, 43–63, 82–102, 110–130, 185–205, 224–244, and 252–272; these read FDII…FLPI, FISM…VLLY, WQLW…GLPL, LHTP…FIIL, YVAT…VLII, VLMT…KWLL, and FKPF…VMFI.

Belongs to the UppP family.

It is found in the cell membrane. It carries out the reaction di-trans,octa-cis-undecaprenyl diphosphate + H2O = di-trans,octa-cis-undecaprenyl phosphate + phosphate + H(+). In terms of biological role, catalyzes the dephosphorylation of undecaprenyl diphosphate (UPP). Confers resistance to bacitracin. This is Undecaprenyl-diphosphatase from Lacticaseibacillus casei (strain BL23) (Lactobacillus casei).